The sequence spans 121 residues: Acid shock protein (121 aa).

An N-terminal signal peptide occupies residues 1 to 21 (MKKVLALMVAATLGLSSVAFA). Residues 22–63 (ADTTATATPAATSTTATVAAQTKATQHQKHKVTKKTTEQKAQ) constitute a propeptide that is removed on maturation. The segment at 40-121 (AAQTKATQHQ…AKKPVAAPAA (82 aa)) is disordered. The segment covering 84-93 (AAKKHVKKAS) has biased composition (basic residues). The span at 94 to 103 (VQKAPVQKAQ) shows a compositional bias: low complexity. Residues 104 to 113 (AAKKHHKTAK) are compositionally biased toward basic residues.

The protein belongs to the Asr family. Post-translationally, proteolytic processing gives rise to the active protein.

It is found in the periplasm. Its function is as follows. Required for growth and/or survival at acidic conditions. This is Acid shock protein from Yersinia pestis bv. Antiqua (strain Antiqua).